The primary structure comprises 91 residues: uncharacterized protein (91 aa).

Residues 7–23 form a helical membrane-spanning segment; that stretch reads IALVGVVVVLFGALRYQ.

Its subcellular location is the membrane. This is an uncharacterized protein from Haemophilus influenzae (strain ATCC 51907 / DSM 11121 / KW20 / Rd).